The chain runs to 106 residues: Thioredoxin-like protein YusE (106 aa).

The 101-residue stretch at 1–101 (MKELQEHELD…LYELIKQKSS (101 aa)) folds into the Thioredoxin domain. Cys-26 and Cys-29 are joined by a disulfide.

The chain is Thioredoxin-like protein YusE (yusE) from Bacillus subtilis (strain 168).